Here is a 295-residue protein sequence, read N- to C-terminus: Non-selective voltage-gated ion channel VDAC2 (295 aa).

Lys-24 and Lys-32 together coordinate ATP. Lys-32 carries the N6-acetyllysine; alternate modification. Lys-32 is modified (N6-succinyllysine; alternate). Residue Lys-32 forms a Glycyl lysine isopeptide (Lys-Gly) (interchain with G-Cter in ubiquitin); alternate linkage. 2 consecutive transmembrane segments (beta stranded) span residues Leu-38–Ser-47 and Val-51–Ser-59. Residues Lys-65 and Lys-73 each participate in a glycyl lysine isopeptide (Lys-Gly) (interchain with G-Cter in ubiquitin) cross-link. The next 4 beta stranded transmembrane spans lie at Val-66–Trp-76, Leu-81–Asn-88, Thr-92–Asp-101, and Leu-107–Ser-116. Lys-121 carries the post-translational modification N6-acetyllysine; alternate. Lys-121 participates in a covalent cross-link: Glycyl lysine isopeptide (Lys-Gly) (interchain with G-Cter in ubiquitin); alternate. Glycyl lysine isopeptide (Lys-Gly) (interchain with G-Cter in ubiquitin) cross-links involve residues Lys-122 and Lys-125. Transmembrane regions (beta stranded) follow at residues Ser-123 to Arg-132, Ile-135 to Asp-142, Ala-149 to Gly-157, and Leu-162 to Asp-170. Lys-173 participates in a covalent cross-link: Glycyl lysine isopeptide (Lys-Gly) (interchain with G-Cter in ubiquitin). 6 consecutive transmembrane segments (beta stranded) span residues Lys-175–Thr-187, Phe-190–Asn-197, Glu-201–Val-210, Phe-214–Thr-223, Arg-230–Leu-239, and Ala-243–Asn-250. Ser-205 is modified (phosphoserine). The residue at position 252 (Ser-252) is a Phosphoserine. NAD(+)-binding positions include Leu-254–Gly-256 and Ser-272–Asp-276. Beta stranded transmembrane passes span Leu-254 to Leu-263 and Gly-266 to Val-275. Lys-278 is modified (N6-acetyllysine; alternate). Lys-278 participates in a covalent cross-link: Glycyl lysine isopeptide (Lys-Gly) (interchain with G-Cter in ubiquitin); alternate. A beta stranded transmembrane segment spans residues His-285–Glu-294. Residue Lys-286 forms a Glycyl lysine isopeptide (Lys-Gly) (interchain with G-Cter in ubiquitin) linkage.

It belongs to the eukaryotic mitochondrial porin family. As to quaternary structure, monomer, homodimer and higher order oligomers; formation of higher order structures is necessary for scramblase activity. Interacts with ARMC12 in a TBC1D21-dependent manner. Interacts with KLC3. Interacts with SPATA33. Interacts with PPP3CC in a SPATA33-dependent manner. Post-translationally, ubiquitinated by PRKN during mitophagy, leading to its degradation and enhancement of mitophagy. Deubiquitinated by USP30.

The protein resides in the mitochondrion outer membrane. It is found in the membrane. The enzyme catalyses chloride(in) = chloride(out). It carries out the reaction K(+)(in) = K(+)(out). It catalyses the reaction a 1,2-diacyl-sn-glycero-3-phospho-L-serine(in) = a 1,2-diacyl-sn-glycero-3-phospho-L-serine(out). The catalysed reaction is a 1,2-diacyl-sn-glycero-3-phosphocholine(in) = a 1,2-diacyl-sn-glycero-3-phosphocholine(out). The enzyme catalyses a 1,2-diacyl-sn-glycero-3-phospho-(1D-myo-inositol)(in) = a 1,2-diacyl-sn-glycero-3-phospho-(1D-myo-inositol)(out). In terms of biological role, non-selective voltage-gated ion channel that mediates the transport of anions and cations through the mitochondrion outer membrane and plasma membrane. The channel adopts an open conformation at zero mV and a closed conformation at both positive and negative potentials. There are two populations of channels; the main that functions in a lower open-state conductance with lower ion selectivity, that switch, in a voltage-dependent manner, from the open to a low-conducting 'closed' state and the other that has a normal ion selectivity in the typical high conductance, 'open' state. Binds various lipids, including the sphingolipid ceramide, the phospholipid phosphatidylcholine, and the sterols cholesterol and oxysterol. Binding of ceramide promotes the mitochondrial outer membrane permeabilization (MOMP) apoptotic pathway. Its function is as follows. Catalyzes the scrambling of phospholipids across the outer mitochondrial membrane; the mechanism is unrelated to channel activity and is capable of translocating both anionic and zwitterionic phospholipids. The polypeptide is Non-selective voltage-gated ion channel VDAC2 (Mesocricetus auratus (Golden hamster)).